A 366-amino-acid polypeptide reads, in one-letter code: Chorismate synthase (366 aa).

NADP(+) contacts are provided by Arg48 and Arg54. Residues 125 to 127, 238 to 239, Gly278, 293 to 297, and Arg319 contribute to the FMN site; these read RSS, NA, and KPTSS.

The protein belongs to the chorismate synthase family. Homotetramer. The cofactor is FMNH2.

The catalysed reaction is 5-O-(1-carboxyvinyl)-3-phosphoshikimate = chorismate + phosphate. The protein operates within metabolic intermediate biosynthesis; chorismate biosynthesis; chorismate from D-erythrose 4-phosphate and phosphoenolpyruvate: step 7/7. In terms of biological role, catalyzes the anti-1,4-elimination of the C-3 phosphate and the C-6 proR hydrogen from 5-enolpyruvylshikimate-3-phosphate (EPSP) to yield chorismate, which is the branch point compound that serves as the starting substrate for the three terminal pathways of aromatic amino acid biosynthesis. This reaction introduces a second double bond into the aromatic ring system. The chain is Chorismate synthase from Cellvibrio japonicus (strain Ueda107) (Pseudomonas fluorescens subsp. cellulosa).